Consider the following 402-residue polypeptide: Tryptophan synthase beta chain (402 aa).

At Lys-91 the chain carries N6-(pyridoxal phosphate)lysine.

The protein belongs to the TrpB family. In terms of assembly, tetramer of two alpha and two beta chains. The cofactor is pyridoxal 5'-phosphate.

The enzyme catalyses (1S,2R)-1-C-(indol-3-yl)glycerol 3-phosphate + L-serine = D-glyceraldehyde 3-phosphate + L-tryptophan + H2O. It functions in the pathway amino-acid biosynthesis; L-tryptophan biosynthesis; L-tryptophan from chorismate: step 5/5. Its function is as follows. The beta subunit is responsible for the synthesis of L-tryptophan from indole and L-serine. The chain is Tryptophan synthase beta chain from Streptococcus thermophilus (strain ATCC BAA-491 / LMD-9).